Consider the following 243-residue polypeptide: Precursor of CEP9 (243 aa).

The signal sequence occupies residues 1-26; it reads MKLLSITLTSIVISMVFYQTPITTEA. Residues 28–44 constitute a propeptide that is removed on maturation; it reads SLRKTNDQDHFKAGFTD. Disordered stretches follow at residues 42 to 63, 91 to 173, and 189 to 243; these read FTDDFVPTSPGNSPGVGHKKGN, KTGS…VKGF, and NGQD…EPKA. Position 48 is a hydroxyproline; partial (P48). P51 carries the hydroxyproline modification. Position 55 is a hydroxyproline; partial (P55). Positions 60–96 are excised as a propeptide; that stretch reads KKGNVNVEGFQDDFKPTEGRKLLKTNVQDHFKTGSTD. 3 positions are modified to hydroxyproline: P100, P103, and P107. The propeptide occupies 112 to 148; that stretch reads KKGNVNVESSEDDFKHKEGRKLQQTNGQNHFKTGSTD. Residues 133–147 show a composition bias toward polar residues; that stretch reads LQQTNGQNHFKTGST. Residues P152, P155, and P159 each carry the hydroxyproline modification. A propeptide spanning residues 164–200 is cleaved from the precursor; it reads KKGHANVKGFKDDFAPTEEIRLQKMNGQDHFKTGSTD. Hydroxyproline is present on residues P204, P207, and P211. The propeptide occupies 216 to 219; that stretch reads KKGD. 3 positions are modified to hydroxyproline: P223, P226, and P230. A propeptide spanning residues 235-243 is cleaved from the precursor; that stretch reads AVKNDEPKA.

The protein belongs to the C-terminally encoded plant signaling peptide (CEP) family. As to quaternary structure, interacts with CEP receptors (e.g. CEPR1 and CEPR2). Post-translationally, hydroxylated peptide is more active than non-hydroxylated peptide. In terms of processing, the mature small signaling peptide is generated by proteolytic processing of the longer precursor. As to expression, expressed in lateral root primordia and in lateral roots excluding the meristem region. Also present in the aerial tissues, such as leaf petioles and the shoot apex region.

It localises to the secreted. The protein localises to the extracellular space. Its subcellular location is the apoplast. Its function is as follows. Extracellular signaling peptide that represses primary root growth rate and significantly inhibits lateral root formation. Modulates leaf morphology. Regulates systemic nitrogen (N)-demand signaling. Mediates up-regulation of genes involved in N uptake and assimilation pathways. In Arabidopsis thaliana (Mouse-ear cress), this protein is Precursor of CEP9.